We begin with the raw amino-acid sequence, 546 residues long: Chaperonin GroEL 1 (546 aa).

ATP-binding positions include 29–32 (TIGP), 86–90 (DGTTT), G413, 477–479 (NAA), and D493. Residues 523–546 (PAEPAPQDGHGHGHGHSHPQGPGF) form a disordered region.

It belongs to the chaperonin (HSP60) family. As to quaternary structure, forms a cylinder of 14 subunits composed of two heptameric rings stacked back-to-back. Interacts with the co-chaperonin GroES.

Its subcellular location is the cytoplasm. It catalyses the reaction ATP + H2O + a folded polypeptide = ADP + phosphate + an unfolded polypeptide.. Together with its co-chaperonin GroES, plays an essential role in assisting protein folding. The GroEL-GroES system forms a nano-cage that allows encapsulation of the non-native substrate proteins and provides a physical environment optimized to promote and accelerate protein folding. This chain is Chaperonin GroEL 1, found in Frankia casuarinae (strain DSM 45818 / CECT 9043 / HFP020203 / CcI3).